We begin with the raw amino-acid sequence, 869 residues long: Valine--tRNA ligase (869 aa).

The 'HIGH' region motif lies at 47-57; the sequence is PYPTGNFHIGN. The 'KMSKS' region signature appears at 521-525; that stretch reads KMSKS. Residue K524 coordinates ATP.

This sequence belongs to the class-I aminoacyl-tRNA synthetase family. ValS type 2 subfamily.

It is found in the cytoplasm. It carries out the reaction tRNA(Val) + L-valine + ATP = L-valyl-tRNA(Val) + AMP + diphosphate. Catalyzes the attachment of valine to tRNA(Val). As ValRS can inadvertently accommodate and process structurally similar amino acids such as threonine, to avoid such errors, it has a 'posttransfer' editing activity that hydrolyzes mischarged Thr-tRNA(Val) in a tRNA-dependent manner. The sequence is that of Valine--tRNA ligase from Methanosarcina barkeri (strain Fusaro / DSM 804).